The chain runs to 189 residues: Peptidyl-tRNA hydrolase (189 aa).

Tyrosine 14 contacts tRNA. Residue histidine 19 is the Proton acceptor of the active site. TRNA is bound by residues phenylalanine 61, asparagine 63, and asparagine 109.

Belongs to the PTH family. In terms of assembly, monomer.

It is found in the cytoplasm. It catalyses the reaction an N-acyl-L-alpha-aminoacyl-tRNA + H2O = an N-acyl-L-amino acid + a tRNA + H(+). Its function is as follows. Hydrolyzes ribosome-free peptidyl-tRNAs (with 1 or more amino acids incorporated), which drop off the ribosome during protein synthesis, or as a result of ribosome stalling. Functionally, catalyzes the release of premature peptidyl moieties from peptidyl-tRNA molecules trapped in stalled 50S ribosomal subunits, and thus maintains levels of free tRNAs and 50S ribosomes. This Sulfurovum sp. (strain NBC37-1) protein is Peptidyl-tRNA hydrolase.